The following is a 113-amino-acid chain: MIPGELLPLEGEIELNAGRETVTLTVANTGDRPIQVGSHFHFYEVNAALNFEREPARGMRLDIPAGTAVRFEPGDERTVTLVPLAGSREVYGFNARIEGPLDGKGKKAKGKNK.

It belongs to the urease beta subunit family. In terms of assembly, heterotrimer of UreA (gamma), UreB (beta) and UreC (alpha) subunits. Three heterotrimers associate to form the active enzyme.

The protein localises to the cytoplasm. The catalysed reaction is urea + 2 H2O + H(+) = hydrogencarbonate + 2 NH4(+). The protein operates within nitrogen metabolism; urea degradation; CO(2) and NH(3) from urea (urease route): step 1/1. This is Urease subunit beta from Cyanothece sp. (strain PCC 7425 / ATCC 29141).